An 89-amino-acid polypeptide reads, in one-letter code: Small ribosomal subunit protein uS14A (89 aa).

Belongs to the universal ribosomal protein uS14 family. As to quaternary structure, part of the 30S ribosomal subunit. Contacts proteins S3 and S10.

Functionally, binds 16S rRNA, required for the assembly of 30S particles and may also be responsible for determining the conformation of the 16S rRNA at the A site. This chain is Small ribosomal subunit protein uS14A, found in Limosilactobacillus reuteri (strain DSM 20016) (Lactobacillus reuteri).